Reading from the N-terminus, the 444-residue chain is Na(+)/H(+) antiporter NhaA 2 (444 aa).

Transmembrane regions (helical) follow at residues Phe-21 to Phe-41, Phe-64 to Leu-84, Ala-102 to Leu-122, Gly-131 to Gly-151, Val-160 to Phe-180, Glu-185 to Ile-205, His-212 to Ile-232, Ala-307 to Val-327, Leu-342 to Leu-362, Trp-377 to Val-397, and Ile-413 to Asn-433.

The protein belongs to the NhaA Na(+)/H(+) (TC 2.A.33) antiporter family.

The protein localises to the cell inner membrane. It carries out the reaction Na(+)(in) + 2 H(+)(out) = Na(+)(out) + 2 H(+)(in). Its function is as follows. Na(+)/H(+) antiporter that extrudes sodium in exchange for external protons. The chain is Na(+)/H(+) antiporter NhaA 2 from Helicobacter hepaticus (strain ATCC 51449 / 3B1).